The sequence spans 85 residues: Small ribosomal subunit protein bS18 (85 aa).

Belongs to the bacterial ribosomal protein bS18 family. As to quaternary structure, part of the 30S ribosomal subunit. Forms a tight heterodimer with protein bS6.

In terms of biological role, binds as a heterodimer with protein bS6 to the central domain of the 16S rRNA, where it helps stabilize the platform of the 30S subunit. The protein is Small ribosomal subunit protein bS18 of Hyphomonas neptunium (strain ATCC 15444).